The following is a 128-amino-acid chain: Sulfurtransferase TusD (128 aa).

Catalysis depends on Cys78, which acts as the Cysteine persulfide intermediate.

This sequence belongs to the DsrE/TusD family. Heterohexamer, formed by a dimer of trimers. The hexameric TusBCD complex contains 2 copies each of TusB, TusC and TusD. The TusBCD complex interacts with TusE.

The protein resides in the cytoplasm. In terms of biological role, part of a sulfur-relay system required for 2-thiolation of 5-methylaminomethyl-2-thiouridine (mnm(5)s(2)U) at tRNA wobble positions. Accepts sulfur from TusA and transfers it in turn to TusE. This chain is Sulfurtransferase TusD, found in Klebsiella pneumoniae subsp. pneumoniae (strain ATCC 700721 / MGH 78578).